A 976-amino-acid chain; its full sequence is Alpha-amylase (976 aa).

The signal sequence occupies residues 1–33 (MKRGKLWGRLVSAAGLSLSIFLSSIGNVSTAYA). The disordered stretch occupies residues 45 to 98 (TKENTESATDASSNEASDAEADNDTDEAITDASSKELSAENDGASESDSSFDEY). A compositionally biased stretch (low complexity) spans 50–60 (ESATDASSNEA). 2 stretches are compositionally biased toward acidic residues: residues 61–73 (SDAE…DEAI) and 87–96 (GASESDSSFD). Residues asparagine 243, threonine 284, and aspartate 293 each coordinate Ca(2+). Aspartate 323 acts as the Nucleophile in catalysis. Histidine 327 serves as a coordination point for Ca(2+). Glutamate 375 (proton donor) is an active-site residue.

The protein belongs to the glycosyl hydrolase 13 family. As to quaternary structure, monomer. Ca(2+) serves as cofactor.

It catalyses the reaction Endohydrolysis of (1-&gt;4)-alpha-D-glucosidic linkages in polysaccharides containing three or more (1-&gt;4)-alpha-linked D-glucose units.. The protein is Alpha-amylase (amyA) of Butyrivibrio fibrisolvens.